A 115-amino-acid chain; its full sequence is NADH-ubiquinone oxidoreductase chain 3 (115 aa).

A run of 3 helical transmembrane segments spans residues 3–23 (LVIALLINTGLATILVMVAFW), 55–75 (FFLVAITFLLFDLEIAILLPI), and 87–107 (LLSLSGVLLALLTLGLAYEWL).

It belongs to the complex I subunit 3 family. Core subunit of respiratory chain NADH dehydrogenase (Complex I) which is composed of 45 different subunits. Interacts with TMEM186. Interacts with TMEM242.

The protein resides in the mitochondrion inner membrane. It catalyses the reaction a ubiquinone + NADH + 5 H(+)(in) = a ubiquinol + NAD(+) + 4 H(+)(out). In terms of biological role, core subunit of the mitochondrial membrane respiratory chain NADH dehydrogenase (Complex I) which catalyzes electron transfer from NADH through the respiratory chain, using ubiquinone as an electron acceptor. Essential for the catalytic activity of complex I. The sequence is that of NADH-ubiquinone oxidoreductase chain 3 from Ornithorhynchus anatinus (Duckbill platypus).